The chain runs to 83 residues: uncharacterized protein (83 aa).

This is an uncharacterized protein from Rhizobium meliloti (strain 1021) (Ensifer meliloti).